The primary structure comprises 228 residues: Ion-translocating oxidoreductase complex subunit E (228 aa).

5 consecutive transmembrane segments (helical) span residues 18 to 38 (ALVQLLGMCPLLAVTSTATNA), 69 to 89 (IPIYVMIIAAVVSIVQMLINA), 92 to 112 (FGLYQSLGIFIPLIVTNCIVV), 125 to 145 (LLSALDGFAIGLGATGAMFVL), and 182 to 202 (PFLLAMLPPGAFIGLGMMLAV).

Belongs to the NqrDE/RnfAE family. The complex is composed of six subunits: RnfA, RnfB, RnfC, RnfD, RnfE and RnfG.

The protein localises to the cell inner membrane. Part of a membrane-bound complex that couples electron transfer with translocation of ions across the membrane. The protein is Ion-translocating oxidoreductase complex subunit E of Cronobacter sakazakii (strain ATCC BAA-894) (Enterobacter sakazakii).